A 1157-amino-acid polypeptide reads, in one-letter code: Hephaestin (1157 aa).

An N-terminal signal peptide occupies residues 1-18 (MKAGHLLWALLLMHSLWS). Over 19 to 1109 (IPTDGAIRNY…PIKDVEILSS (1091 aa)) the chain is Extracellular. Plastocyanin-like domains are found at residues 24–206 (AIRN…LITC), 218–366 (QRKD…VDSC), 370–559 (PPVD…LLVC), 569–717 (KQKG…VSQC), 730–902 (ASRV…LVIC), and 910–1066 (NGGR…SHEE). N-linked (GlcNAc...) asparagine glycosylation is found at Asn49 and Asn54. 2 residues coordinate Na(+): Gly70 and Tyr73. His126 and His128 together coordinate Cu(2+). His126 serves as a coordination point for O2. Residues Lys134, Asp152, and Asp153 each coordinate Ca(2+). N-linked (GlcNAc...) asparagine glycosylation occurs at Asn164. Cys180 and Cys206 form a disulfide bridge. Cu(2+)-binding residues include His186 and His188. An O2-binding site is contributed by His186. N-linked (GlcNAc...) asparagine glycosylation occurs at Asn236. Residue Ser265 participates in Na(+) binding. Residues Cys285 and Cys366 are joined by a disulfide bond. Cu(2+)-binding residues include His304, Cys347, and His352. Positions 416, 425, and 428 each coordinate Na(+). An intrachain disulfide couples Cys533 to Cys559. Asn587 is a glycosylation site (N-linked (GlcNAc...) asparagine). Position 616 (Ser616) interacts with Na(+). The cysteines at positions 636 and 717 are disulfide-linked. Cu(2+)-binding residues include His655, Cys698, His703, and Met708. Residues Asn713 and Asn757 are each glycosylated (N-linked (GlcNAc...) asparagine). Na(+) contacts are provided by Phe768 and Gly777. Residues Cys876 and Cys902 are joined by a disulfide bond. A glycan (N-linked (GlcNAc...) asparagine) is linked at Asn930. Cu(2+) contacts are provided by His999, His1002, His1004, His1044, Cys1045, His1046, His1050, and Met1055. His1002 and His1004 together coordinate O2. Position 1046 (His1046) interacts with O2. The chain crosses the membrane as a helical span at residues 1110–1130 (ALIAICVLLLLIALALGGVVW). Residues 1131-1157 (YQHRQRKLRRNRRSILDDSFKLLSLKQ) are Cytoplasmic-facing. A phosphoserine mark is found at Ser1144, Ser1149, and Ser1154.

The protein belongs to the multicopper oxidase family. Part of a complex composed of SLC40A1/ferroportin, TF/transferrin and HEPH/hephaestin that transfers iron from cells to transferrin. Requires Cu cation as cofactor.

It localises to the basolateral cell membrane. The enzyme catalyses 4 Fe(2+) + O2 + 4 H(+) = 4 Fe(3+) + 2 H2O. In terms of biological role, plasma membrane ferroxidase that mediates the extracellular conversion of ferrous/Fe(2+) iron into its ferric/Fe(3+) form. Couples ferroportin which specifically exports ferrous/Fe(2+) iron from cells to transferrin that only binds and shuttles extracellular ferric/Fe(3+) iron throughout the body. By helping iron transfer from cells to blood mainly contributes to dietary iron absorption by the intestinal epithelium and more generally regulates iron levels in the body. This chain is Hephaestin, found in Mus musculus (Mouse).